The following is a 119-amino-acid chain: Protein ELF4-LIKE 2 (119 aa).

The interval 91 to 119 is disordered; the sequence is SVDASSEGESTGTLKSDGKANNQKRFRSG. Over residues 93–111 the composition is skewed to polar residues; sequence DASSEGESTGTLKSDGKAN.

The protein belongs to the EARLY FLOWERING 4 family. Homodimer.

It is found in the nucleus. Component of the central CCA1/LHY-TOC1 feedback loop in the circadian clock that promotes clock accuracy and is required for sustained rhythms in the absence of daily light/dark cycles. The polypeptide is Protein ELF4-LIKE 2 (EFL2) (Arabidopsis thaliana (Mouse-ear cress)).